Reading from the N-terminus, the 110-residue chain is MIFMGKTSLGLDENIEGALCYLFGVITGILFYILEKESKFVKFHAVQSIILFGGLWVLSIILAFIPYGWMLSGLVNLAAFILWIVCMYKAYKGEKFKLPVIGDIAEQYSQ.

3 helical membrane-spanning segments follow: residues 15 to 35 (IEGA…YILE), 49 to 69 (IILF…PYGW), and 70 to 90 (MLSG…MYKA).

The protein belongs to the UPF0132 family.

The protein localises to the cell membrane. This chain is UPF0132 membrane protein MJ1443, found in Methanocaldococcus jannaschii (strain ATCC 43067 / DSM 2661 / JAL-1 / JCM 10045 / NBRC 100440) (Methanococcus jannaschii).